The chain runs to 986 residues: Mediator of RNA polymerase II transcription subunit 24 (986 aa).

Short sequence motifs (LXXLL motif) lie at residues 128–132 (LNWLL), 341–345 (LTPLL), 445–449 (LDLLL), 554–558 (LVALL), 785–789 (LPNLL), and 855–859 (LMRLL).

The protein belongs to the Mediator complex subunit 24 family. As to quaternary structure, component of the Mediator complex.

It localises to the nucleus. Functionally, component of the Mediator complex, a coactivator involved in the regulated transcription of nearly all RNA polymerase II-dependent genes. Mediator functions as a bridge to convey information from gene-specific regulatory proteins to the basal RNA polymerase II transcription machinery. Mediator is recruited to promoters by direct interactions with regulatory proteins and serves as a scaffold for the assembly of a functional preinitiation complex with RNA polymerase II and the general transcription factors. This Gallus gallus (Chicken) protein is Mediator of RNA polymerase II transcription subunit 24 (MED24).